The following is a 204-amino-acid chain: MRYTSTAIEALIEEFAKLPGIGRKTAQRLSMHILQEKPGEVEKLSRALTDVKEKVISCSICQNVTDRGDDPCSICRGKGRDLSKICVVESPPDVLAFEKTAQYRGLYHVLHGVISPLDGVGPDDIKVKELLARLSLQDGREVSEVIMALSPTVEGETTVLYVSRLLKPLGIEVTKIARGIPVGAELEYIDEATLSRAMEGRSVL.

A C4-type zinc finger spans residues 58 to 75 (CSICQNVTDRGDDPCSIC). The 99-residue stretch at 83–181 (SKICVVESPP…EVTKIARGIP (99 aa)) folds into the Toprim domain.

The protein belongs to the RecR family.

In terms of biological role, may play a role in DNA repair. It seems to be involved in an RecBC-independent recombinational process of DNA repair. It may act with RecF and RecO. The sequence is that of Recombination protein RecR from Chlorobium phaeobacteroides (strain BS1).